A 136-amino-acid chain; its full sequence is Large ribosomal subunit protein bL20 (136 aa).

It belongs to the bacterial ribosomal protein bL20 family.

Binds directly to 23S ribosomal RNA and is necessary for the in vitro assembly process of the 50S ribosomal subunit. It is not involved in the protein synthesizing functions of that subunit. In Tropheryma whipplei (strain Twist) (Whipple's bacillus), this protein is Large ribosomal subunit protein bL20.